Here is a 34-residue protein sequence, read N- to C-terminus: Trypsin inhibitor 2 (34 aa).

The cyclopeptide (Ser-Gly) cross-link spans 1 to 34; sequence SGSDGGVCPKILKKCRRDSDCPGACICRGNGYCG. The (2-aminosuccinimidyl)acetic acid (Asp-Gly); alternate cross-link spans 4–5; the sequence is DG. The isoaspartyl glycine isopeptide (Asp-Gly); alternate cross-link spans 4 to 5; it reads DG. 3 disulfides stabilise this stretch: cysteine 8-cysteine 25, cysteine 15-cysteine 27, and cysteine 21-cysteine 33.

A cyclic succinimide probably forms by loss of water between Asp-4 and Gly-5, that can then rehydrate to either the original peptide bond or to a beta-aspartyl isopeptide bond. Three isoforms of MCoTI-II are detected, two with the parent molecular weight, corresponding to the unmodified and proposed isopeptide forms, and one with a molecular weight 18 Da lower, corresponding to a succinimide cross-linked form. Post-translationally, this is a cyclic peptide.

It is found in the secreted. In terms of biological role, inhibits trypsin; probably participates in a plant defense mechanism. The chain is Trypsin inhibitor 2 from Momordica cochinchinensis (Spiny bitter cucumber).